The primary structure comprises 150 residues: 3-dehydroquinate dehydratase (150 aa).

Tyr-26 acts as the Proton acceptor in catalysis. Asn-77, His-83, and Asp-90 together coordinate substrate. His-103 functions as the Proton donor in the catalytic mechanism. Substrate-binding positions include 104 to 105 and Arg-114; that span reads LS.

Belongs to the type-II 3-dehydroquinase family. Homododecamer.

It catalyses the reaction 3-dehydroquinate = 3-dehydroshikimate + H2O. Its pathway is metabolic intermediate biosynthesis; chorismate biosynthesis; chorismate from D-erythrose 4-phosphate and phosphoenolpyruvate: step 3/7. Its function is as follows. Catalyzes a trans-dehydration via an enolate intermediate. This is 3-dehydroquinate dehydratase from Yersinia enterocolitica serotype O:8 / biotype 1B (strain NCTC 13174 / 8081).